Reading from the N-terminus, the 486-residue chain is UDP-N-acetylmuramate--L-alanine ligase (486 aa).

126–132 (GTHGKTS) provides a ligand contact to ATP.

The protein belongs to the MurCDEF family.

It is found in the cytoplasm. It catalyses the reaction UDP-N-acetyl-alpha-D-muramate + L-alanine + ATP = UDP-N-acetyl-alpha-D-muramoyl-L-alanine + ADP + phosphate + H(+). The protein operates within cell wall biogenesis; peptidoglycan biosynthesis. In terms of biological role, cell wall formation. The protein is UDP-N-acetylmuramate--L-alanine ligase of Corynebacterium glutamicum (strain ATCC 13032 / DSM 20300 / JCM 1318 / BCRC 11384 / CCUG 27702 / LMG 3730 / NBRC 12168 / NCIMB 10025 / NRRL B-2784 / 534).